Consider the following 132-residue polypeptide: Small ribosomal subunit protein uS8c (132 aa).

The protein belongs to the universal ribosomal protein uS8 family. In terms of assembly, part of the 30S ribosomal subunit.

The protein localises to the plastid. The protein resides in the chloroplast. Functionally, one of the primary rRNA binding proteins, it binds directly to 16S rRNA central domain where it helps coordinate assembly of the platform of the 30S subunit. The polypeptide is Small ribosomal subunit protein uS8c (rps8) (Ceratophyllum demersum (Rigid hornwort)).